The sequence spans 646 residues: ATP-dependent zinc metalloprotease FtsH (646 aa).

The Cytoplasmic portion of the chain corresponds to 1–4 (MTRS). The chain crosses the membrane as a helical span at residues 5–25 (LLWQMVIVLGAILMVNYVLTT). At 26 to 120 (LTPQTQEPVV…VRPESKPSPW (95 aa)) the chain is on the periplasmic side. Residues 121–141 (ATAMIYMLPWLLIVGVWWFVI) form a helical membrane-spanning segment. The Cytoplasmic segment spans residues 142 to 646 (KGMRTRQGPG…GELAGGAVEG (505 aa)). Residue 216–223 (GPPGTGKT) coordinates ATP. H437 contacts Zn(2+). E438 is an active-site residue. Residues H441 and D513 each coordinate Zn(2+).

The protein in the central section; belongs to the AAA ATPase family. It in the C-terminal section; belongs to the peptidase M41 family. In terms of assembly, homohexamer. Requires Zn(2+) as cofactor.

It is found in the cell inner membrane. Its function is as follows. Acts as a processive, ATP-dependent zinc metallopeptidase for both cytoplasmic and membrane proteins. Plays a role in the quality control of integral membrane proteins. The polypeptide is ATP-dependent zinc metalloprotease FtsH (Syntrophotalea carbinolica (strain DSM 2380 / NBRC 103641 / GraBd1) (Pelobacter carbinolicus)).